The sequence spans 431 residues: D-inositol 3-phosphate glycosyltransferase (431 aa).

Residue His14 coordinates 1D-myo-inositol 3-phosphate. Residues 20–21 and Gly28 contribute to the UDP-N-acetyl-alpha-D-glucosamine site; that span reads QP. Residues 25–30, Lys83, Tyr116, Thr140, and Arg160 contribute to the 1D-myo-inositol 3-phosphate site; that span reads DAGGMN. UDP-N-acetyl-alpha-D-glucosamine is bound by residues Arg240 and Lys245. Mg(2+) contacts are provided by Tyr315, Arg316, and Ala318. Positions 328 and 336 each coordinate UDP-N-acetyl-alpha-D-glucosamine. Position 342 (Thr342) interacts with Mg(2+).

This sequence belongs to the glycosyltransferase group 1 family. MshA subfamily. As to quaternary structure, homodimer.

It carries out the reaction 1D-myo-inositol 3-phosphate + UDP-N-acetyl-alpha-D-glucosamine = 1D-myo-inositol 2-acetamido-2-deoxy-alpha-D-glucopyranoside 3-phosphate + UDP + H(+). Functionally, catalyzes the transfer of a N-acetyl-glucosamine moiety to 1D-myo-inositol 3-phosphate to produce 1D-myo-inositol 2-acetamido-2-deoxy-glucopyranoside 3-phosphate in the mycothiol biosynthesis pathway. In Thermomonospora curvata (strain ATCC 19995 / DSM 43183 / JCM 3096 / KCTC 9072 / NBRC 15933 / NCIMB 10081 / Henssen B9), this protein is D-inositol 3-phosphate glycosyltransferase.